A 102-amino-acid chain; its full sequence is Small ribosomal subunit protein uS10 (102 aa).

This sequence belongs to the universal ribosomal protein uS10 family. In terms of assembly, part of the 30S ribosomal subunit.

Involved in the binding of tRNA to the ribosomes. This is Small ribosomal subunit protein uS10 from Staphylococcus aureus (strain Mu3 / ATCC 700698).